The chain runs to 86 residues: Small ribosomal subunit protein bS16 (86 aa).

The protein belongs to the bacterial ribosomal protein bS16 family.

The chain is Small ribosomal subunit protein bS16 from Bordetella avium (strain 197N).